Here is a 156-residue protein sequence, read N- to C-terminus: RNA polymerase sigma factor SigS (156 aa).

Positions 29-44 (EYYQLLLIKMWQLSQI) match the Polymerase core binding motif. The H-T-H motif DNA-binding region spans 126–145 (QYEIADIMSLSTSTIKLIKA).

Belongs to the sigma-70 factor family.

Sigma factors are initiation factors that promote the attachment of RNA polymerase to specific initiation sites and are then released. Sigma-S contributes to the protection against external stress, thus playing a role in cellular fitness and survival. The protein is RNA polymerase sigma factor SigS (sigS) of Staphylococcus aureus (strain MRSA252).